Reading from the N-terminus, the 220-residue chain is uncharacterized protein (220 aa).

A disordered region spans residues 1–50 (MTDDVRDVNTETTDATEVAEIDSAAGEAGDSATEAFDTDSATESTAQKGQ). Residues 39–48 (DSATESTAQK) are compositionally biased toward polar residues. The helical transmembrane segment at 65-85 (VPVILILLMLISGGATGWLYL) threads the bilayer.

To M.tuberculosis Rv1363c.

The protein resides in the membrane. This is an uncharacterized protein from Mycobacterium tuberculosis (strain CDC 1551 / Oshkosh).